A 242-amino-acid chain; its full sequence is Enolase-phosphatase E1 (242 aa).

The protein belongs to the HAD-like hydrolase superfamily. MasA/MtnC family. Monomer. It depends on Mg(2+) as a cofactor.

The enzyme catalyses 5-methylsulfanyl-2,3-dioxopentyl phosphate + H2O = 1,2-dihydroxy-5-(methylsulfanyl)pent-1-en-3-one + phosphate. Its pathway is amino-acid biosynthesis; L-methionine biosynthesis via salvage pathway; L-methionine from S-methyl-5-thio-alpha-D-ribose 1-phosphate: step 3/6. The protein operates within amino-acid biosynthesis; L-methionine biosynthesis via salvage pathway; L-methionine from S-methyl-5-thio-alpha-D-ribose 1-phosphate: step 4/6. Functionally, bifunctional enzyme that catalyzes the enolization of 2,3-diketo-5-methylthiopentyl-1-phosphate (DK-MTP-1-P) into the intermediate 2-hydroxy-3-keto-5-methylthiopentenyl-1-phosphate (HK-MTPenyl-1-P), which is then dephosphorylated to form the acireductone 1,2-dihydroxy-3-keto-5-methylthiopentene (DHK-MTPene). The sequence is that of Enolase-phosphatase E1 from Synechococcus sp. (strain WH7803).